The chain runs to 457 residues: Exodeoxyribonuclease 7 large subunit (457 aa).

It belongs to the XseA family. Heterooligomer composed of large and small subunits.

Its subcellular location is the cytoplasm. The catalysed reaction is Exonucleolytic cleavage in either 5'- to 3'- or 3'- to 5'-direction to yield nucleoside 5'-phosphates.. In terms of biological role, bidirectionally degrades single-stranded DNA into large acid-insoluble oligonucleotides, which are then degraded further into small acid-soluble oligonucleotides. The polypeptide is Exodeoxyribonuclease 7 large subunit (Escherichia coli O127:H6 (strain E2348/69 / EPEC)).